Here is a 197-residue protein sequence, read N- to C-terminus: dCTP deaminase, dUMP-forming (197 aa).

DCTP contacts are provided by residues 105–110 (RSSIGR), aspartate 123, 131–133 (TLE), glutamine 152, tyrosine 166, lysine 174, and glutamine 178. Glutamate 133 functions as the Proton donor/acceptor in the catalytic mechanism. The segment at 161–183 (PAERPYGHPSRDSKYIGQTRPQT) is disordered. A compositionally biased stretch (basic and acidic residues) spans 165–174 (PYGHPSRDSK).

It belongs to the dCTP deaminase family. As to quaternary structure, homotrimer.

The enzyme catalyses dCTP + 2 H2O = dUMP + NH4(+) + diphosphate. It participates in pyrimidine metabolism; dUMP biosynthesis; dUMP from dCTP: step 1/1. Bifunctional enzyme that catalyzes both the deamination of dCTP to dUTP and the hydrolysis of dUTP to dUMP without releasing the toxic dUTP intermediate. In Methanothermobacter thermautotrophicus (strain ATCC 29096 / DSM 1053 / JCM 10044 / NBRC 100330 / Delta H) (Methanobacterium thermoautotrophicum), this protein is dCTP deaminase, dUMP-forming.